The chain runs to 170 residues: CASP-like protein 1F1 (170 aa).

At 1-16 the chain is on the cytoplasmic side; that stretch reads MMGDNEGRRTPLLNLG. A helical transmembrane segment spans residues 17-37; sequence VQVSMRVLIIGAAMASMWVMI. Residues 38–62 are Extracellular-facing; that stretch reads TNREVASVYGIAFEAKYSYSSAFRY. A helical transmembrane segment spans residues 63–83; it reads LVYAQIAVCAATLFTLVWACL. At 84–88 the chain is on the cytoplasmic side; the sequence is AVRRR. Residues 89 to 109 form a helical membrane-spanning segment; that stretch reads GLVFALFFFDLLTTLTAISAF. The Extracellular segment spans residues 110–141; the sequence is SAAFAEGYVGKYGNKQAGWLPICGYVHVYCSR. The helical transmembrane segment at 142–162 threads the bilayer; it reads VTISLAMSFASFVLLFILTVL. The Cytoplasmic segment spans residues 163–170; that stretch reads TASSARHY.

This sequence belongs to the Casparian strip membrane proteins (CASP) family. As to quaternary structure, homodimer and heterodimers.

It localises to the cell membrane. The chain is CASP-like protein 1F1 from Arabidopsis lyrata subsp. lyrata (Lyre-leaved rock-cress).